The primary structure comprises 131 residues: Small ribosomal subunit protein bS6 (131 aa).

A disordered region spans residues 96-131 (VTAPSPMMKEEKSKSLLAKDEAAAPAPAPATEQATA). Positions 103–117 (MKEEKSKSLLAKDEA) are enriched in basic and acidic residues. Over residues 118-131 (AAPAPAPATEQATA) the composition is skewed to low complexity.

This sequence belongs to the bacterial ribosomal protein bS6 family.

In terms of biological role, binds together with bS18 to 16S ribosomal RNA. This chain is Small ribosomal subunit protein bS6, found in Methylobacillus flagellatus (strain ATCC 51484 / DSM 6875 / VKM B-1610 / KT).